The following is a 385-amino-acid chain: Putative actin-25 (385 aa).

The protein belongs to the actin family.

It localises to the cytoplasm. Its subcellular location is the cytoskeleton. The enzyme catalyses ATP + H2O = ADP + phosphate + H(+). Functionally, actins are highly conserved proteins that are involved in various types of cell motility and are ubiquitously expressed in all eukaryotic cells. Multiple isoforms are involved in various cellular functions such as cytoskeleton structure, cell mobility, chromosome movement and muscle contraction. The protein is Putative actin-25 (act25) of Dictyostelium discoideum (Social amoeba).